Consider the following 691-residue polypeptide: Guanylate cyclase soluble subunit alpha-1 (691 aa).

The segment at 26–65 (PREPLGEATGSGPASTPGQPGVCPGVPDKNPPGRLPRRKT) is disordered. The 128-residue stretch at 482-609 (TMLFSDIVGF…NNVTLANKFE (128 aa)) folds into the Guanylate cyclase domain.

This sequence belongs to the adenylyl cyclase class-4/guanylyl cyclase family. As to quaternary structure, heterodimer of an alpha and a beta chain.

The protein localises to the cytoplasm. The enzyme catalyses GTP = 3',5'-cyclic GMP + diphosphate. Its activity is regulated as follows. Activated by nitric oxide in the presence of magnesium or manganese ions. The polypeptide is Guanylate cyclase soluble subunit alpha-1 (GUCY1A1) (Bos taurus (Bovine)).